We begin with the raw amino-acid sequence, 368 residues long: Abasic site processing protein YMR114C (368 aa).

Residue Cys2 is the Nucleophile of the active site. Cys2 carries the thiazolidine linkage to a ring-opened DNA abasic site modification. The segment at 25 to 48 is disordered; the sequence is VNTPKDASSNSQHPHDEEDTKDQP. Basic and acidic residues predominate over residues 37 to 46; it reads HPHDEEDTKD. Residue Glu132 is part of the active site. The tract at residues 270–368 is disordered; the sequence is LENDNEQGID…DSRGKKKIKK (99 aa). Basic and acidic residues-rich tracts occupy residues 281-296, 304-313, and 326-349; these read RGVK…DVFN, NSYDGLKKNE, and IGDR…EKRN. Position 338 is a phosphoserine (Ser338).

It belongs to the SOS response-associated peptidase family.

Its subcellular location is the chromosome. Its activity is regulated as follows. Formation and reversal of DNA-protein cross-link depends on DNA context. Catalyzes formation of the thiazolidine linkage in presence of abasic sites in single-stranded DNA. Mediates the reversal of the thiazolidine cross-link in presence of double stranded DNA. In terms of biological role, sensor of abasic sites in single-stranded DNA (ssDNA) required to preserve genome integrity by promoting error-free repair of abasic sites. Recognizes and binds abasic sites in ssDNA at replication forks and chemically modifies the lesion by forming a covalent cross-link with DNA: forms a stable thiazolidine linkage between a ring-opened abasic site and the alpha-amino and sulfhydryl substituents of its N-terminal catalytic cysteine residue. The DNA-protein cross-link is then reversed: able to catalyze the reversal of the thiazolidine cross-link and cycle between a cross-link and a non-cross-linked state depending on DNA context: mediates self-reversal of the thiazolidine cross-link in double stranded DNA. Acts as a protease: mediates autocatalytic processing of its N-terminal methionine in order to expose the catalytic cysteine. This chain is Abasic site processing protein YMR114C, found in Saccharomyces cerevisiae (strain ATCC 204508 / S288c) (Baker's yeast).